The following is a 1171-amino-acid chain: Protein diaphanous homolog 3 (1171 aa).

The segment covering 1-15 (MERHRARALGRDSKS) has biased composition (basic and acidic residues). The interval 1–40 (MERHRARALGRDSKSSRRKGLQSAPPAGPYEPGEKRPKLH) is disordered. The Nuclear localization signal motif lies at 16 to 39 (SRRKGLQSAPPAGPYEPGEKRPKL). A Phosphothreonine modification is found at T47. Position 56 is a phosphoserine (S56). Positions 60 to 95 (PGSKKERPPLPHLKTVSGISDSSSLSSETMENNPKA) are disordered. Over residues 76 to 86 (SGISDSSSLSS) the composition is skewed to low complexity. The 363-residue stretch at 93 to 455 (PKALPESEVL…QIVLHRDGTD (363 aa)) folds into the GBD/FH3 domain. S154 carries the post-translational modification Phosphoserine. 2 coiled-coil regions span residues 373-403 (EHKE…YSML) and 478-533 (QAKL…FGAL). The disordered stretch occupies residues 532-601 (ALPPGTKIPL…PPPPLGFLGG (70 aa)). An FH1 domain is found at 540–610 (PLQPSVEGEA…GQSSIPLNLP (71 aa)). Residues 553-596 (ALPPAPPALSGGVPPPPPPPPPPPPPLPGMPMPFGGPVPPPPPL) are compositionally biased toward pro residues. Residue S604 is modified to Phosphoserine. In terms of domain architecture, FH2 spans 615–1013 (PKKEFKPEIS…EKRARIAKER (399 aa)). Coiled coils occupy residues 887-918 (DKAS…LETF) and 988-1038 (MLAL…GDET). Positions 1036-1066 (DETGVMDSLLEALQSGAAFRDRRKRTPKLKD) constitute a DAD domain. Residues S1072 and S1157 each carry the phosphoserine modification. Positions 1162–1171 (EALLARLRAL) match the Nuclear export signal motif.

The protein belongs to the formin homology family. Diaphanous subfamily. Post-translationally, ubiquitinated.

It localises to the cytoplasm. The protein localises to the nucleus. Functionally, actin nucleation and elongation factor required for the assembly of F-actin structures, such as actin cables and stress fibers. Required for cytokinesis, stress fiber formation and transcriptional activation of the serum response factor. Binds to GTP-bound form of Rho and to profilin: acts in a Rho-dependent manner to recruit profilin to the membrane, where it promotes actin polymerization. DFR proteins couple Rho and Src tyrosine kinase during signaling and the regulation of actin dynamics. Also acts as an actin nucleation and elongation factor in the nucleus by promoting nuclear actin polymerization inside the nucleus to drive serum-dependent SRF-MRTFA activity. This is Protein diaphanous homolog 3 (Diaph3) from Mus musculus (Mouse).